The primary structure comprises 803 residues: Translation initiation factor IF-2 (803 aa).

2 disordered regions span residues 95–125 (PVVE…EKAE) and 138–209 (EVKE…KLEQ). The segment covering 111 to 121 (VPLTSDTTNLN) has biased composition (polar residues). Residues 138-155 (EVKEEAKKTPSEKKETPK) show a composition bias toward basic and acidic residues. Positions 156-167 (KGPRKETRRSRK) are enriched in basic residues. The span at 168 to 188 (PDKEDKWEREELHMTKLVEER) shows a compositional bias: basic and acidic residues. Residues 302 to 471 (PRAPVVTIMG…LLQAEVLELK (170 aa)) form the tr-type G domain. Residues 311–318 (GHVDHGKT) are G1. 311 to 318 (GHVDHGKT) is a binding site for GTP. Positions 336–340 (GITQH) are G2. Residues 357–360 (DTPG) form a G3 region. Residues 357–361 (DTPGH) and 411–414 (NKID) each bind GTP. A G4 region spans residues 411–414 (NKID). Residues 447–449 (SAK) are G5.

This sequence belongs to the TRAFAC class translation factor GTPase superfamily. Classic translation factor GTPase family. IF-2 subfamily.

It localises to the cytoplasm. Its function is as follows. One of the essential components for the initiation of protein synthesis. Protects formylmethionyl-tRNA from spontaneous hydrolysis and promotes its binding to the 30S ribosomal subunits. Also involved in the hydrolysis of GTP during the formation of the 70S ribosomal complex. The protein is Translation initiation factor IF-2 of Coxiella burnetii (strain CbuG_Q212) (Coxiella burnetii (strain Q212)).